Reading from the N-terminus, the 334-residue chain is Ketol-acid reductoisomerase (NADP(+)) (334 aa).

In terms of domain architecture, KARI N-terminal Rossmann spans Thr2 to Thr181. Residues Tyr25 to Gln28, Arg48, Ser52, and Asp82 to Gln85 contribute to the NADP(+) site. The active site involves His107. NADP(+) is bound at residue Gly133. The 146-residue stretch at Thr182–Ile327 folds into the KARI C-terminal knotted domain. Positions 190, 194, 226, and 230 each coordinate Mg(2+). Ser251 provides a ligand contact to substrate.

The protein belongs to the ketol-acid reductoisomerase family. The cofactor is Mg(2+).

It catalyses the reaction (2R)-2,3-dihydroxy-3-methylbutanoate + NADP(+) = (2S)-2-acetolactate + NADPH + H(+). The enzyme catalyses (2R,3R)-2,3-dihydroxy-3-methylpentanoate + NADP(+) = (S)-2-ethyl-2-hydroxy-3-oxobutanoate + NADPH + H(+). The protein operates within amino-acid biosynthesis; L-isoleucine biosynthesis; L-isoleucine from 2-oxobutanoate: step 2/4. It participates in amino-acid biosynthesis; L-valine biosynthesis; L-valine from pyruvate: step 2/4. Functionally, involved in the biosynthesis of branched-chain amino acids (BCAA). Catalyzes an alkyl-migration followed by a ketol-acid reduction of (S)-2-acetolactate (S2AL) to yield (R)-2,3-dihydroxy-isovalerate. In the isomerase reaction, S2AL is rearranged via a Mg-dependent methyl migration to produce 3-hydroxy-3-methyl-2-ketobutyrate (HMKB). In the reductase reaction, this 2-ketoacid undergoes a metal-dependent reduction by NADPH to yield (R)-2,3-dihydroxy-isovalerate. The protein is Ketol-acid reductoisomerase (NADP(+)) of Staphylococcus haemolyticus (strain JCSC1435).